Consider the following 951-residue polypeptide: Pheromone-regulated membrane protein 10 (951 aa).

Composition is skewed to polar residues over residues 1–10 (MSSSYGNNGD), 68–84 (GGST…NVGS), and 92–104 (RTAS…NRRQ). Disordered regions lie at residues 1–293 (MSSS…EDPI), 313–366 (AGKS…TMVS), and 433–487 (NDSS…LPNF). Acidic residues predominate over residues 126–135 (DDDDEEEEEH). Residues 219–234 (PHQETNDGRNSAESHS) are compositionally biased toward basic and acidic residues. 3 stretches are compositionally biased toward polar residues: residues 318-332 (PGTQ…SSEH), 354-366 (PFNQ…TMVS), and 468-484 (SQTN…SMNL). The next 10 membrane-spanning stretches (helical) occupy residues 635–655 (WVSV…AFGG), 657–677 (WINM…QFIV), 687–707 (VFEV…GSIP), 711–731 (ICFG…YIIL), 753–773 (IIYS…FGWI), 786–806 (NISP…LGLI), 811–831 (WTQL…TYFS), 841–861 (FTSA…SRIW), 863–883 (GFAV…GVAS), and 918–938 (VTMI…TLFI).

This sequence belongs to the ThrE exporter (TC 2.A.79) family.

It is found in the membrane. In Kluyveromyces lactis (strain ATCC 8585 / CBS 2359 / DSM 70799 / NBRC 1267 / NRRL Y-1140 / WM37) (Yeast), this protein is Pheromone-regulated membrane protein 10.